We begin with the raw amino-acid sequence, 142 residues long: uncharacterized protein (142 aa).

An N-acetyltransferase domain is found at 1–120 (MADKFDANDE…TILKWEKNMD (120 aa)).

This sequence belongs to the acetyltransferase family.

This is an uncharacterized protein from Streptococcus pyogenes serotype M1.